Here is a 207-residue protein sequence, read N- to C-terminus: ATP-dependent Clp protease proteolytic subunit (207 aa).

Serine 111 acts as the Nucleophile in catalysis. The active site involves histidine 136.

It belongs to the peptidase S14 family. As to quaternary structure, fourteen ClpP subunits assemble into 2 heptameric rings which stack back to back to give a disk-like structure with a central cavity, resembling the structure of eukaryotic proteasomes.

The protein resides in the cytoplasm. It catalyses the reaction Hydrolysis of proteins to small peptides in the presence of ATP and magnesium. alpha-casein is the usual test substrate. In the absence of ATP, only oligopeptides shorter than five residues are hydrolyzed (such as succinyl-Leu-Tyr-|-NHMec, and Leu-Tyr-Leu-|-Tyr-Trp, in which cleavage of the -Tyr-|-Leu- and -Tyr-|-Trp bonds also occurs).. In terms of biological role, cleaves peptides in various proteins in a process that requires ATP hydrolysis. Has a chymotrypsin-like activity. Plays a major role in the degradation of misfolded proteins. This is ATP-dependent Clp protease proteolytic subunit from Photorhabdus laumondii subsp. laumondii (strain DSM 15139 / CIP 105565 / TT01) (Photorhabdus luminescens subsp. laumondii).